The primary structure comprises 48 residues: Delta-stichotoxin-She1a (48 aa).

3 disulfides stabilise this stretch: Cys3/Cys43, Cys5/Cys33, and Cys26/Cys44.

The protein belongs to the sea anemone sodium channel inhibitory toxin family. Type II subfamily.

It is found in the secreted. The protein resides in the nematocyst. In terms of biological role, binds specifically to voltage-gated sodium channels (Nav), thereby delaying their inactivation during signal transduction. Is highly toxic to crabs (by intrahemocoelic injection), but without effect upon mice (by intraperitoneal injection). The chain is Delta-stichotoxin-She1a from Stichodactyla helianthus (Sun anemone).